A 445-amino-acid polypeptide reads, in one-letter code: Gastrula zinc finger protein 5-1 (445 aa).

Positions 1 to 38 (MLQIKTEKEELDCGDDQNPKESSAVPLTDGASPEPQPQ) are disordered. Phosphoserine; by CK2 is present on Ser89. The C2H2-type 1; atypical zinc-finger motif lies at 185 to 210 (FICCKCGDSFAHHSDLHTHLYACAGH). 7 consecutive C2H2-type zinc fingers follow at residues 239-261 (FKCTVCGKCFTLKNSLQLHHRIH), 267-289 (FTCTECGKSFAQSCSLQLHSRTH), 295-317 (YVCTECGKRFSSNSGLRRHMRTH), 323-345 (YACKECGKFFSDLSTLHRHQNSH), 351-373 (FICTECGKGFTLKDSLHRHQRTH), 379-401 (FICSQCGKSYSQSSNLIKHQMIH), and 407-429 (FSCSECGKCFAVKDGLRNHQRVH).

Binds to RNA homomers. The polypeptide is Gastrula zinc finger protein 5-1 (Xenopus laevis (African clawed frog)).